The primary structure comprises 333 residues: Taste receptor type 2 member 38 (333 aa).

Over 1–17 (MLTLTRIHTVSYEVRST) the chain is Extracellular. A helical transmembrane segment spans residues 18–38 (FLFISVLEFAVGFLTNAFVFL). Residues 39–55 (VNFWDVVKRQPLSNSDC) are Cytoplasmic-facing. The chain crosses the membrane as a helical span at residues 56 to 76 (VLLCLSISRLFLHGLLFLSAI). The Extracellular portion of the chain corresponds to 77-94 (QLTHFQKLSEPLNHSYQA). Residues 95-115 (INMLWMIANQANLWLAACLSL) traverse the membrane as a helical segment. The Cytoplasmic segment spans residues 116–142 (LYCSKLIRFSHTFLICLASWVSRKISQ). A helical transmembrane segment spans residues 143–163 (MLLGIILCSCICTVLCVWCFF). The Extracellular segment spans residues 164 to 190 (SRPHFTVTTVLFMNNNTRLNWQIKDLN). Asparagine 178 carries an N-linked (GlcNAc...) asparagine glycan. Residues 191–211 (LFYSFLFCYLWSVPPFLLFLV) form a helical membrane-spanning segment. At 212–251 (SSGMLTVSLGRHMRTMKVYTRDSRDPSLEAHIKALKSLVS) the chain is on the cytoplasmic side. A helical membrane pass occupies residues 252 to 272 (FFCFFVISSCAAFISVPLLIL). Over 273 to 276 (WRDK) the chain is Extracellular. A helical transmembrane segment spans residues 277-297 (IGVMVCVGIMAACPSGHAAVL). At 298 to 333 (ISGNAKLRRAVTTILLWAQSSLKVRADHKADSRTLC) the chain is on the cytoplasmic side.

It belongs to the G-protein coupled receptor T2R family.

Its subcellular location is the membrane. Receptor that may play a role in the perception of bitterness and is gustducin-linked. May play a role in sensing the chemical composition of the gastrointestinal content. The activity of this receptor may stimulate alpha gustducin, mediate PLC-beta-2 activation and lead to the gating of TRPM5. The protein is Taste receptor type 2 member 38 (TAS2R38) of Pan paniscus (Pygmy chimpanzee).